The following is a 325-amino-acid chain: N-acetyl-gamma-glutamyl-phosphate reductase (325 aa).

The active site involves Cys135.

It belongs to the NAGSA dehydrogenase family. Type 1 subfamily.

The protein resides in the cytoplasm. It carries out the reaction N-acetyl-L-glutamate 5-semialdehyde + phosphate + NADP(+) = N-acetyl-L-glutamyl 5-phosphate + NADPH + H(+). The protein operates within amino-acid biosynthesis; L-arginine biosynthesis; N(2)-acetyl-L-ornithine from L-glutamate: step 3/4. Functionally, catalyzes the NADPH-dependent reduction of N-acetyl-5-glutamyl phosphate to yield N-acetyl-L-glutamate 5-semialdehyde. This is N-acetyl-gamma-glutamyl-phosphate reductase from Flavobacterium johnsoniae (strain ATCC 17061 / DSM 2064 / JCM 8514 / BCRC 14874 / CCUG 350202 / NBRC 14942 / NCIMB 11054 / UW101) (Cytophaga johnsonae).